A 628-amino-acid chain; its full sequence is MALVSAVPLDSRLCLCRTLFGLTHELKAIRRTIPNLGMCRGGKSIAPSMSMSSTTFVSSEDGVPRRIGGHHSNLWDDDSIDSLSTSYEAPSYRERADRLIGEVKDMFHLISVEDGVSTSPLNDLHHRLWMVDSVERLGIDRHFKNETNAALDHVYSYWTEKGIGRGRESGATDLNSTALGLRTLRLHGYMVSSHVLDHFKNEKGQFACSAIQTDGEIRDVLNLFRASLIAFPGEKIMEEAEMFSTMFLKDALQKIPPSGLSQEIEYLLEFGWHTNLPRMETRMYIDVFGEDTTFETPYLIRERLLELAKLEFNIFHSLVKRELQSLSRWWKDYGFPEITFSRHRHVEYYTLAACIANDPKHSAFRLGFAKICHMVTILDDIYDTFGTMEELELLTAAFKRWDPSSIECLPDYMKGVYMAVYDNINETAREAQKIQGWDIVSYARKSWEALFDAHMQEARWISSGYLPTFEEYLENGKVSFGSRLTTLEPMLTLGFPLSPRILQEIDFPSNFNELICAILRLRGDTQCYKADMARGEEASSVSCYMKDHPGITEEDAVNQINALVNNLTKELNWELLRPDSGVPISYKKFYFDIWRVFHYGYKYRDGFSVASIEIKNLVTRTVVETVPL.

Aspartate 379, aspartate 383, and aspartate 531 together coordinate Mg(2+). Residues 379 to 383 (DDIYD) carry the DDXXD motif motif.

The protein belongs to the terpene synthase family. Tpsd subfamily. The cofactor is Mg(2+). It depends on Mn(2+) as a cofactor.

Its subcellular location is the plastid. It is found in the chloroplast. Its pathway is terpene metabolism; oleoresin biosynthesis. It participates in secondary metabolite biosynthesis; terpenoid biosynthesis. Monoterpene synthase (TPS) involved in the biosynthesis of monoterpene natural products included in conifer oleoresin secretions and volatile emissions; these compounds contribute to biotic and abiotic stress defense against herbivores and pathogens. This Pinus banksiana (Jack pine) protein is Monoterpene synthase like 1, chloroplastic.